Consider the following 169-residue polypeptide: Small ribosomal subunit protein uS13m (169 aa).

A disordered region spans residues 149–169 (KKLQEKKNKEQKKSQKCKTKK). Residues 150-161 (KLQEKKNKEQKK) are compositionally biased toward basic and acidic residues.

Belongs to the universal ribosomal protein uS13 family. In terms of assembly, part of the small ribosomal subunit.

The protein localises to the mitochondrion. Functionally, located at the top of the head of the small subunit, it contacts several helices of the small subunit rRNA. This chain is Small ribosomal subunit protein uS13m (mrps13), found in Dictyostelium discoideum (Social amoeba).